The primary structure comprises 341 residues: Methionine import ATP-binding protein MetN (341 aa).

Positions 9-247 (ISVEQLNKEI…PQSAITEELF (239 aa)) constitute an ABC transporter domain. 41 to 48 (GHSGSGKS) serves as a coordination point for ATP.

Belongs to the ABC transporter superfamily. Methionine importer (TC 3.A.1.24) family. In terms of assembly, the complex is composed of two ATP-binding proteins (MetN), two transmembrane proteins (MetI) and a solute-binding protein (MetQ).

The protein resides in the cell inner membrane. The enzyme catalyses L-methionine(out) + ATP + H2O = L-methionine(in) + ADP + phosphate + H(+). It carries out the reaction D-methionine(out) + ATP + H2O = D-methionine(in) + ADP + phosphate + H(+). In terms of biological role, part of the ABC transporter complex MetNIQ involved in methionine import. Responsible for energy coupling to the transport system. The chain is Methionine import ATP-binding protein MetN from Chlamydia abortus (strain DSM 27085 / S26/3) (Chlamydophila abortus).